Reading from the N-terminus, the 440-residue chain is Alpha-methylserine aldolase (440 aa).

At Lys255 the chain carries N6-(pyridoxal phosphate)lysine.

It belongs to the SHMT family. Alpha-methylserine aldolase subfamily. As to quaternary structure, homodimer. Pyridoxal 5'-phosphate is required as a cofactor.

It catalyses the reaction 2-methyl-L-serine = formaldehyde + L-alanine. The enzyme catalyses 2-ethyl-L-serine = (2S)-2-aminobutanoate + formaldehyde. Its activity is regulated as follows. In the alpha-methyl-L-serine synthesis reaction, activity is inhibited by an excess amount of formaldehyde (at a concentration greater than 4 mM). Formaldehyde release activity is reduced by the sulfhydryl reagent N-ethylmaleimide, iodoacetate amide and iodoacetic acid, but not by dithiothreitol and 2-mercaptoethanol. Activity is enhanced by 1 mM of manganese chloride. Functionally, catalyzes the reversible interconversion of alpha-methyl-L-serine to L-alanine and formaldehyde. Can also catalyze the synthesis of alpha-ethyl-L-serine from L-2-aminobutyric acid and formaldehyde. Also shows low alanine racemase activity. Cannot use alpha-methyl-D-serine, L-serine, D-serine, (S)-2-amino-1-propanol, (R)-2-amino-1-propanol, (S)-alpha-hydroxymethyltyrosine, (R)-alpha-hydroxymethyltyrosine, alpha-iso-butyl-DL-serine, alpha-iso-propyl-DL-serine or alpha-benzyl-DL-serine. Cannot use D-alanine instead of L-alanine as the substrate for alpha-methyl-L-serine synthesis. Does not require tetrahydrofolate (THF) for activity. The sequence is that of Alpha-methylserine aldolase from Variovorax paradoxus.